Reading from the N-terminus, the 564-residue chain is Formate--tetrahydrofolate ligase (564 aa).

69–76 (TPAGEGKS) is a binding site for ATP.

Belongs to the formate--tetrahydrofolate ligase family.

The catalysed reaction is (6S)-5,6,7,8-tetrahydrofolate + formate + ATP = (6R)-10-formyltetrahydrofolate + ADP + phosphate. It functions in the pathway one-carbon metabolism; tetrahydrofolate interconversion. The polypeptide is Formate--tetrahydrofolate ligase (Renibacterium salmoninarum (strain ATCC 33209 / DSM 20767 / JCM 11484 / NBRC 15589 / NCIMB 2235)).